The primary structure comprises 310 residues: Methionyl-tRNA formyltransferase (310 aa).

Residue 109–112 participates in (6S)-5,6,7,8-tetrahydrofolate binding; that stretch reads SLLP.

The protein belongs to the Fmt family.

It catalyses the reaction L-methionyl-tRNA(fMet) + (6R)-10-formyltetrahydrofolate = N-formyl-L-methionyl-tRNA(fMet) + (6S)-5,6,7,8-tetrahydrofolate + H(+). Attaches a formyl group to the free amino group of methionyl-tRNA(fMet). The formyl group appears to play a dual role in the initiator identity of N-formylmethionyl-tRNA by promoting its recognition by IF2 and preventing the misappropriation of this tRNA by the elongation apparatus. In Staphylococcus epidermidis (strain ATCC 35984 / DSM 28319 / BCRC 17069 / CCUG 31568 / BM 3577 / RP62A), this protein is Methionyl-tRNA formyltransferase.